Consider the following 557-residue polypeptide: Urocanate hydratase (557 aa).

Residues 52–53, Gln-130, 176–178, Glu-196, Arg-201, 242–243, 263–267, 273–274, and Tyr-322 each bind NAD(+); these read GG, GMG, NA, QTSAH, and YL. Cys-410 is an active-site residue. Position 492 (Gly-492) interacts with NAD(+).

This sequence belongs to the urocanase family. It depends on NAD(+) as a cofactor.

The protein resides in the cytoplasm. It catalyses the reaction 4-imidazolone-5-propanoate = trans-urocanate + H2O. It participates in amino-acid degradation; L-histidine degradation into L-glutamate; N-formimidoyl-L-glutamate from L-histidine: step 2/3. Its function is as follows. Catalyzes the conversion of urocanate to 4-imidazolone-5-propionate. The polypeptide is Urocanate hydratase (Allorhizobium ampelinum (strain ATCC BAA-846 / DSM 112012 / S4) (Agrobacterium vitis (strain S4))).